A 529-amino-acid chain; its full sequence is Scarecrow-like protein 13 (529 aa).

A compositionally biased stretch (polar residues) spans 51–81 (ASGSLPSYDSPSVSITSGRSPFSPQGSQSCI). The segment at 51 to 84 (ASGSLPSYDSPSVSITSGRSPFSPQGSQSCISDL) is disordered. The 380-residue stretch at 146–525 (LLALTPQLDL…RPMATCSVWK (380 aa)) folds into the GRAS domain. The segment at 153 to 213 (LDLKEVLVEA…RARLEGSGSN (61 aa)) is leucine repeat I (LRI). A VHIID region spans residues 232–297 (MSVLYEICPY…GGPPLLRVTG (66 aa)). The VHIID motif lies at 263–267 (VHIID). Residues 313 to 345 (LVGERLATLAQSCGVPFEFHDAIMSGCKVQREH) are leucine repeat II (LRII). Residues 354–448 (VVVNFPYVLH…QHCVARDIVN (95 aa)) form a PFYRE region. Residues 451-525 (ACEESERVER…RPMATCSVWK (75 aa)) are SAW.

The protein belongs to the GRAS family. In terms of tissue distribution, expressed in roots, hypocotyls, cotyledons, shoot apex, leaves, flowers and siliques.

The protein resides in the cytoplasm. It localises to the nucleus. Its function is as follows. Probable transcription factor that acts as a positive regulator of continuous red light signals downstream of phytochrome B (phyB). Required for the regulation of hypocotyl elongation during de-etiolation. May be required to modulate phytochrome A (phyA) signal transduction in a phyB-independent way. This chain is Scarecrow-like protein 13 (SCL13), found in Arabidopsis thaliana (Mouse-ear cress).